Here is a 220-residue protein sequence, read N- to C-terminus: Sec-independent protein translocase protein TatB (220 aa).

The chain crosses the membrane as a helical span at residues 1-21 (MFDIGFSELLLVLVIGLVVLG). Residues 190 to 220 (VTKQQIDTIDSHGTDLSSAGPSRIHQPGGDQ) form a disordered region.

The protein belongs to the TatB family. The Tat system comprises two distinct complexes: a TatABC complex, containing multiple copies of TatA, TatB and TatC subunits, and a separate TatA complex, containing only TatA subunits. Substrates initially bind to the TatABC complex, which probably triggers association of the separate TatA complex to form the active translocon.

It localises to the cell inner membrane. In terms of biological role, part of the twin-arginine translocation (Tat) system that transports large folded proteins containing a characteristic twin-arginine motif in their signal peptide across membranes. Together with TatC, TatB is part of a receptor directly interacting with Tat signal peptides. TatB may form an oligomeric binding site that transiently accommodates folded Tat precursor proteins before their translocation. This chain is Sec-independent protein translocase protein TatB, found in Yersinia pseudotuberculosis serotype I (strain IP32953).